A 353-amino-acid polypeptide reads, in one-letter code: Photosystem II D2 protein (353 aa).

Threonine 2 bears the N-acetylthreonine mark. A Phosphothreonine modification is found at threonine 2. Residues 41–61 (CAYFAVGGWFTGTTFVTSWYT) form a helical membrane-spanning segment. Histidine 118 is a chlorophyll a binding site. A helical membrane pass occupies residues 125 to 141 (GFMLRQFELARSVQLRP). The pheophytin a site is built by glutamine 130 and asparagine 143. A helical membrane pass occupies residues 153–166 (VFVSVFLIYPLGQS). Residue histidine 198 participates in chlorophyll a binding. Residues 208 to 228 (AALLCAIHGATVENTLFEDGD) traverse the membrane as a helical segment. The a plastoquinone site is built by histidine 215 and phenylalanine 262. A Fe cation-binding site is contributed by histidine 215. A Fe cation-binding site is contributed by histidine 269. The chain crosses the membrane as a helical span at residues 279 to 295 (GLWMSALGVVGLALNLR).

It belongs to the reaction center PufL/M/PsbA/D family. As to quaternary structure, PSII is composed of 1 copy each of membrane proteins PsbA, PsbB, PsbC, PsbD, PsbE, PsbF, PsbH, PsbI, PsbJ, PsbK, PsbL, PsbM, PsbT, PsbX, PsbY, PsbZ, Psb30/Ycf12, at least 3 peripheral proteins of the oxygen-evolving complex and a large number of cofactors. It forms dimeric complexes. The cofactor is The D1/D2 heterodimer binds P680, chlorophylls that are the primary electron donor of PSII, and subsequent electron acceptors. It shares a non-heme iron and each subunit binds pheophytin, quinone, additional chlorophylls, carotenoids and lipids. There is also a Cl(-1) ion associated with D1 and D2, which is required for oxygen evolution. The PSII complex binds additional chlorophylls, carotenoids and specific lipids..

It localises to the plastid. The protein localises to the chloroplast thylakoid membrane. The enzyme catalyses 2 a plastoquinone + 4 hnu + 2 H2O = 2 a plastoquinol + O2. In terms of biological role, photosystem II (PSII) is a light-driven water:plastoquinone oxidoreductase that uses light energy to abstract electrons from H(2)O, generating O(2) and a proton gradient subsequently used for ATP formation. It consists of a core antenna complex that captures photons, and an electron transfer chain that converts photonic excitation into a charge separation. The D1/D2 (PsbA/PsbD) reaction center heterodimer binds P680, the primary electron donor of PSII as well as several subsequent electron acceptors. D2 is needed for assembly of a stable PSII complex. In Solanum bulbocastanum (Wild potato), this protein is Photosystem II D2 protein.